The chain runs to 386 residues: MATTIKSRFPLLLLLGIIFLASVVSVTYANYDEGSEPRVPAQRERGRQEGEKEEKRHGEWRPSYEKEEDEEEGQRERGRQEGEKEEKRHGEWGPSYEKQEDEEEKQKYRYQREKEDEEEKQKYQYQREKKEQKEVQPGRERWEREEDEEQVDEEWRGSQRREDPEERARLRHREERTKRDRRHQREGEEEERSSESQERRNPFLFKSNKFLTLFENENGHIRLLQRFDKRSDLFENLQNYRLVEYRAKPHTIFLPQHIDADLILVVLSGKAILTVLSPNDRNSYNLERGDTIKLPAGTTSYLVNQDDEEDLRLVDLVIPVNGPGKFEAFDLAKNKNQYLRGFSKNILEASYNTRYETIEKVLLEEQEKDRKRRQQGEETDAIVKVS.

The first 29 residues, 1 to 29 (MATTIKSRFPLLLLLGIIFLASVVSVTYA), serve as a signal peptide directing secretion. Residues 33-199 (EGSEPRVPAQ…EERSSESQER (167 aa)) are disordered. Composition is skewed to basic and acidic residues over residues 41 to 65 (AQRE…PSYE), 74 to 91 (QRER…RHGE), 104 to 144 (EKQK…RWER), and 153 to 186 (EEWR…HQRE). One can recognise a Cupin type-1 domain in the interval 202-359 (PFLFKSNKFL…SYNTRYETIE (158 aa)). The segment at 367-386 (EKDRKRRQQGEETDAIVKVS) is disordered.

It belongs to the 7S seed storage protein family.

The protein resides in the vacuole. The protein localises to the aleurone grain. In terms of biological role, seed storage protein. The protein is Convicilin (CVCB) of Pisum sativum (Garden pea).